Reading from the N-terminus, the 133-residue chain is L-cystatin (133 aa).

Residues 1-19 (MEGYNILAVLIILVGVSMG) form the signal peptide. At Gln-20 the chain carries Pyrrolidone carboxylic acid. The Secondary area of contact motif lies at 67 to 71 (QVVSG). 2 cysteine pairs are disulfide-bonded: Cys-85–Cys-98 and Cys-109–Cys-129.

The protein belongs to the cystatin family. As to expression, expressed in hemocytes and slightly in heart.

It localises to the cytoplasmic granule. Tight-binding inhibitor for papain. It has an important role in the protection of cells, antimicrobial activity against Gram-negative bacteria, defense against invading microbes, and response to external stimuli. This Tachypleus tridentatus (Japanese horseshoe crab) protein is L-cystatin.